The chain runs to 520 residues: FAD-linked oxidoreductase OXR2 (520 aa).

An N-terminal signal peptide occupies residues 1–23 (MKSFSLLASAGLATLASLPLTMA). Residues Asn77, Asn220, Asn378, and Asn390 are each glycosylated (N-linked (GlcNAc...) asparagine). The FAD-binding PCMH-type domain occupies 79–251 (SRPTIRLVVV…TSFQSKIYPR (173 aa)).

Belongs to the oxygen-dependent FAD-linked oxidoreductase family. Requires FAD as cofactor.

It functions in the pathway polyketide biosynthesis. In terms of biological role, FAD-linked oxidoreductase; part of the gene cluster that mediates the biosynthesis of pyriculol and pyriculariol, two heptaketides that induce lesion formation upon application on rice leaves but are dispensable for pathogenicity. The highly reducing polyketide synthase synthesizes the heptaketide backbone of pyriculol and pyriculariol. Pyriculol and pyriculariol contain several hydroxyl moieties and double bonds, so it can be assumed that several reduction steps occur during biosynthesis. These reactions could be executed by PKS19 itself or partly by the tailoring enzymes OXR1, OXR2, RED1, RED2 or RED3, identified within the cluster. The FAD-linked oxidoreductase OXR1 is the only tailoring enzyme for which the function has been determined yet, and is involved in the oxidation of dihydropyriculol and dihydropyriculariol into pyriculol and pyriculariol, respectively. In Pyricularia oryzae (strain 70-15 / ATCC MYA-4617 / FGSC 8958) (Rice blast fungus), this protein is FAD-linked oxidoreductase OXR2.